Here is a 563-residue protein sequence, read N- to C-terminus: Arginine--tRNA ligase (563 aa).

A 'HIGH' region motif is present at residues 121–131 (PNIAKPFSIGH).

This sequence belongs to the class-I aminoacyl-tRNA synthetase family. As to quaternary structure, monomer.

Its subcellular location is the cytoplasm. It carries out the reaction tRNA(Arg) + L-arginine + ATP = L-arginyl-tRNA(Arg) + AMP + diphosphate. This chain is Arginine--tRNA ligase, found in Streptococcus pneumoniae (strain P1031).